A 601-amino-acid polypeptide reads, in one-letter code: Elongation factor 4 (601 aa).

The tr-type G domain occupies 5–187; sequence EHIRNFSIIA…AIVERLPAPE (183 aa). Residues 17 to 22 and 134 to 137 contribute to the GTP site; these read DHGKST and NKVD.

The protein belongs to the TRAFAC class translation factor GTPase superfamily. Classic translation factor GTPase family. LepA subfamily.

Its subcellular location is the cell inner membrane. It carries out the reaction GTP + H2O = GDP + phosphate + H(+). In terms of biological role, required for accurate and efficient protein synthesis under certain stress conditions. May act as a fidelity factor of the translation reaction, by catalyzing a one-codon backward translocation of tRNAs on improperly translocated ribosomes. Back-translocation proceeds from a post-translocation (POST) complex to a pre-translocation (PRE) complex, thus giving elongation factor G a second chance to translocate the tRNAs correctly. Binds to ribosomes in a GTP-dependent manner. The sequence is that of Elongation factor 4 from Nitratidesulfovibrio vulgaris (strain DSM 19637 / Miyazaki F) (Desulfovibrio vulgaris).